The chain runs to 757 residues: Tyrosine-protein kinase HTK16 (757 aa).

The 93-residue stretch at 10-102 folds into the SH2 1 domain; sequence WYHGKITREV…GLPCKLVDFC (93 aa). ANK repeat units lie at residues 115–147, 151–180, 184–214, 219–248, and 252–281; these read GLDT…NVNA, SGLT…DASA, NGRT…DFLK, NGWV…SMYP, and DGDT…NQPK. The SH2 2 domain occupies 287 to 379; it reads WLHQNLDRNG…GLPTLLQFPV (93 aa). Disordered regions lie at residues 381 to 407 and 444 to 467; these read SAEN…PSRP and PKLP…QKGD. A compositionally biased stretch (polar residues) spans 455-467; the sequence is EVPNSVNVGQKGD. The Protein kinase domain occupies 484–740; the sequence is ISFGKELGVG…PTFNELHSTF (257 aa). Residues 490 to 498 and lysine 516 each bind ATP; that span reads LGVGEFGSV. Aspartate 608 serves as the catalytic Proton acceptor. Tyrosine 746 bears the Phosphotyrosine mark.

Belongs to the protein kinase superfamily. Tyr protein kinase family. Epithelial cells.

The catalysed reaction is L-tyrosyl-[protein] + ATP = O-phospho-L-tyrosyl-[protein] + ADP + H(+). Its function is as follows. May be involved in signal transduction. The sequence is that of Tyrosine-protein kinase HTK16 (HTK16) from Hydra vulgaris (Hydra).